A 315-amino-acid chain; its full sequence is Iron(3+)-hydroxamate-binding protein FhuD (315 aa).

The first 23 residues, 1–23 (MTHIYKKLGAAFFALLLIAALAA), serve as a signal peptide directing secretion. A lipid anchor (N-palmitoyl cysteine) is attached at Cys-24. Cys-24 is lipidated: S-diacylglycerol cysteine. Residues 60 to 315 (RVVVMADGYY…LEFITESLTK (256 aa)) form the Fe/B12 periplasmic-binding domain.

It belongs to the bacterial solute-binding protein 8 family. In terms of assembly, the complex is composed of an ATP-binding protein (FhuC), two transmembrane proteins (FhuB and FhuG) and a solute-binding protein (FhuD or YxeB).

It is found in the cell membrane. Its subcellular location is the membrane raft. In terms of biological role, part of the ABC transporter complex FhuCBGD involved in iron(3+)-hydroxamate import. Binds the iron(3+)-hydroxamate complex and transfers it to the membrane-bound permease. Required for the transport of ferrichrome and coprogen. The sequence is that of Iron(3+)-hydroxamate-binding protein FhuD (fhuD) from Bacillus subtilis (strain 168).